Here is an 81-residue protein sequence, read N- to C-terminus: ATP synthase subunit c (81 aa).

Helical transmembrane passes span 5–25 (VAAA…IGPG) and 57–77 (LAFM…LLFA).

The protein belongs to the ATPase C chain family. As to quaternary structure, F-type ATPases have 2 components, F(1) - the catalytic core - and F(0) - the membrane proton channel. F(1) has five subunits: alpha(3), beta(3), gamma(1), delta(1), epsilon(1). F(0) has four main subunits: a(1), b(1), b'(1) and c(10-14). The alpha and beta chains form an alternating ring which encloses part of the gamma chain. F(1) is attached to F(0) by a central stalk formed by the gamma and epsilon chains, while a peripheral stalk is formed by the delta, b and b' chains.

It is found in the cellular thylakoid membrane. Its function is as follows. F(1)F(0) ATP synthase produces ATP from ADP in the presence of a proton or sodium gradient. F-type ATPases consist of two structural domains, F(1) containing the extramembraneous catalytic core and F(0) containing the membrane proton channel, linked together by a central stalk and a peripheral stalk. During catalysis, ATP synthesis in the catalytic domain of F(1) is coupled via a rotary mechanism of the central stalk subunits to proton translocation. Key component of the F(0) channel; it plays a direct role in translocation across the membrane. A homomeric c-ring of between 10-14 subunits forms the central stalk rotor element with the F(1) delta and epsilon subunits. This is ATP synthase subunit c from Microcystis aeruginosa (strain NIES-843 / IAM M-2473).